The following is a 379-amino-acid chain: MPTSEQNEFSHGSVGVVYTQSIRFESLTLEGGETITPLEIAYETYGTLNEKKDNAILVCHALSGDAHAAGFHEGDKRPGWWDYYIGPGKSFDTNRYFIISSNVIGGCKGSSGPLTINGKNGKPFQSTFPFVSIGDMVNAQEKLISHFGIHKLFAVAGGSMGGMQALQWSVAYPDRLKNCIVMASSSEHSAQQIAFNEVGRQAILSDPNWNQGLYTQENRPSKGLALARMMGHITYLSDEMMREKFGRKPPKGNIQSTDFAVGSYLIYQGESFVDRFDANSYIYVTKALDHFSLGTGKELTKVLAKVRCRFLVVAYTSDWLYPPYQSEEIVKSLEVNAVPVSFVELNNPAGRHDSFLLPSEQQDSILRDFLSSTDEGVFL.

The AB hydrolase-1 domain occupies 54–332 (NAILVCHALS…PYQSEEIVKS (279 aa)). S159 serves as the catalytic Nucleophile. Position 228 (R228) interacts with substrate. Residues D318 and H352 contribute to the active site. Position 353 (D353) interacts with substrate.

It belongs to the AB hydrolase superfamily. MetX family. Homodimer.

It localises to the cytoplasm. It catalyses the reaction L-homoserine + acetyl-CoA = O-acetyl-L-homoserine + CoA. It participates in amino-acid biosynthesis; L-methionine biosynthesis via de novo pathway; O-acetyl-L-homoserine from L-homoserine: step 1/1. Transfers an acetyl group from acetyl-CoA to L-homoserine, forming acetyl-L-homoserine. In Leptospira meyeri, this protein is Homoserine O-acetyltransferase.